We begin with the raw amino-acid sequence, 227 residues long: Protein lin-28 (227 aa).

Residues 1-17 (MSTVVSEGRNDGNNRYS) show a composition bias toward polar residues. The interval 1–27 (MSTVVSEGRNDGNNRYSPQDEVEDRLP) is disordered. Residues 52–120 (RYFGSCKWFN…GREAYAVSGE (69 aa)) form the CSD domain. CCHC-type zinc fingers lie at residues 143–160 (RCFR…SCPN) and 166–183 (KVCY…ICPE). Residues cysteine 144, cysteine 147, histidine 153, cysteine 158, cysteine 168, cysteine 171, histidine 176, and cysteine 181 each coordinate Zn(2+). Residues 181 to 227 (CPERRRKHRPEQVAAEEAEAARMAAEKSSPTTSDDDIREKNSNSSDE) form a disordered region.

Belongs to the lin-28 family. As to quaternary structure, component of a complex at least containing lep-2, lin-28 and the long non-coding RNA lep-5, which mediates the degradation of lin-28. Cleavage by caspase ced-3 during larval development probably induces lin-28 degradation.

Its subcellular location is the cytoplasm. In terms of biological role, heterochronic protein which controls the choice of stage specific cell fates. Regulates the timing of the second larval stage events (L2 events) in the hypodermis. May negatively regulate the larval to adult transition via the suppression of the microRNA (miRNA) let-7 during L3. Through this regulatory role, controls the timing of the sexual maturation of the nervous system. Also has a role in the fox-1-sex-1-mediated determination of sexual fate. Plays a role in governing the developmental timing of male tail tip morphogenesis. Plays a role in controlling the seam cell number during larval stages. Plays a role in vulval development. The chain is Protein lin-28 from Caenorhabditis elegans.